A 69-amino-acid polypeptide reads, in one-letter code: Alpha-conotoxin SrIA/SrIB (69 aa).

Residues 1 to 21 form the signal peptide; the sequence is MGMRMMFTVFLLVVLATTVVS. Residues 22 to 48 constitute a propeptide that is removed on maturation; the sequence is FTSDSAFDSRNVAANDKVSDMIALTAR. 2 cysteine pairs are disulfide-bonded: Cys-51-Cys-57 and Cys-52-Cys-65. A ser-Xaa-Pro motif, crucial for potent interaction with nAChR region spans residues 53–55; the sequence is SRP. Pro-55 is modified (4-hydroxyproline; in form Sr1A and Sr1B). Glu-60 is subject to 4-carboxyglutamate; in form Sr1A. Residue Glu-63 is modified to 4-carboxyglutamate; in form Sr1A and Sr1B. At Gly-66 the chain carries Glycine amide; in form Sr1A and Sr1B.

Belongs to the conotoxin A superfamily. Post-translationally, occurs in 2 forms which differ in the post-translational modification of Glu-60. In form SrA1 Glu-60 is 4-carboxyglutamate while in form SrA2 Glu-60 is unmodified. In terms of tissue distribution, expressed by the venom duct.

It localises to the secreted. Alpha-conotoxins act on postsynaptic membranes, they bind to the nicotinic acetylcholine receptors (nAChR) and thus inhibit them. Has weak blocking effects on muscle nAChR composed of alpha-1/beta-1/gamma/delta subunits and the central nervous system nAChR composed of alpha-4/beta-2 subunits. Does not detectably affect the peripheral nervous system nAChR composed of alpha-3/beta-4 subunits. Low toxin concentrations potentiate currents in muscle nAChR composed of alpha-1/beta-1/gamma/delta subunits and central nervous system nAChR composed of alpha-4/beta-2 subunits, but not the peripheral nervous system nAChR composed of alpha-3/beta-4 subunits. The protein is Alpha-conotoxin SrIA/SrIB of Conus spurius (Alphabet cone).